Here is a 100-residue protein sequence, read N- to C-terminus: uncharacterized protein (100 aa).

The chain crosses the membrane as a helical span at residues 13-32; it reads IWSSLNIICLMVTFLNVQLS.

The protein localises to the mitochondrion membrane. This is an uncharacterized protein from Schizosaccharomyces pombe (strain 972 / ATCC 24843) (Fission yeast).